Consider the following 148-residue polypeptide: Large ribosomal subunit protein uL15B (148 aa).

Basic residues-rich tracts occupy residues 1-13 (MPTH…KLRG) and 21-31 (RIGKHRKHPGG). The segment at 1 to 38 (MPTHTSKTRKLRGHVSAGHGRIGKHRKHPGGRGKAGGL) is disordered. At Y108 the chain carries Phosphotyrosine.

It belongs to the universal ribosomal protein uL15 family. As to quaternary structure, component of the large ribosomal subunit (LSU). Mature yeast ribosomes consist of a small (40S) and a large (60S) subunit. The 40S small subunit contains 1 molecule of ribosomal RNA (18S rRNA) and at least 33 different proteins. The large 60S subunit contains 3 rRNA molecules (25S, 5.8S and 5S rRNA) and at least 46 different proteins.

The protein localises to the cytoplasm. The protein resides in the nucleus. Its subcellular location is the nucleolus. Its function is as follows. Component of the ribosome, a large ribonucleoprotein complex responsible for the synthesis of proteins in the cell. The small ribosomal subunit (SSU) binds messenger RNAs (mRNAs) and translates the encoded message by selecting cognate aminoacyl-transfer RNA (tRNA) molecules. The large subunit (LSU) contains the ribosomal catalytic site termed the peptidyl transferase center (PTC), which catalyzes the formation of peptide bonds, thereby polymerizing the amino acids delivered by tRNAs into a polypeptide chain. The nascent polypeptides leave the ribosome through a tunnel in the LSU and interact with protein factors that function in enzymatic processing, targeting, and the membrane insertion of nascent chains at the exit of the ribosomal tunnel. This is Large ribosomal subunit protein uL15B (rpl2801) from Schizosaccharomyces pombe (strain 972 / ATCC 24843) (Fission yeast).